The following is a 259-amino-acid chain: Type III pantothenate kinase (259 aa).

6 to 13 contacts ATP; sequence DAGNTNIV. Substrate is bound by residues Tyr100 and 107–110; that span reads GADR. The active-site Proton acceptor is Asp109. Position 129 (Asp129) interacts with K(+). Thr132 is a binding site for ATP. A substrate-binding site is contributed by Thr184.

It belongs to the type III pantothenate kinase family. Homodimer. NH4(+) serves as cofactor. K(+) is required as a cofactor.

Its subcellular location is the cytoplasm. The enzyme catalyses (R)-pantothenate + ATP = (R)-4'-phosphopantothenate + ADP + H(+). It functions in the pathway cofactor biosynthesis; coenzyme A biosynthesis; CoA from (R)-pantothenate: step 1/5. Functionally, catalyzes the phosphorylation of pantothenate (Pan), the first step in CoA biosynthesis. The chain is Type III pantothenate kinase from Clostridium novyi (strain NT).